The chain runs to 371 residues: GTPase Obg (371 aa).

In terms of domain architecture, Obg spans 1–159 (MKFLDQAKVY…KTIWLRLKLI (159 aa)). The OBG-type G domain maps to 160–327 (ADAGLVGLPN…VLRALRDIIV (168 aa)). Residues 166–173 (GLPNAGKS), 191–195 (FTTLH), 212–215 (DIPG), 279–282 (SQID), and 308–310 (SAI) contribute to the GTP site. The Mg(2+) site is built by serine 173 and threonine 193. The disordered stretch occupies residues 337–371 (APMKALKVRHRDMQSSGNEGESEDNSDRDDEEQQG). The span at 356–371 (GESEDNSDRDDEEQQG) shows a compositional bias: acidic residues.

Belongs to the TRAFAC class OBG-HflX-like GTPase superfamily. OBG GTPase family. Monomer. It depends on Mg(2+) as a cofactor.

The protein localises to the cytoplasm. Functionally, an essential GTPase which binds GTP, GDP and possibly (p)ppGpp with moderate affinity, with high nucleotide exchange rates and a fairly low GTP hydrolysis rate. Plays a role in control of the cell cycle, stress response, ribosome biogenesis and in those bacteria that undergo differentiation, in morphogenesis control. In Rhizobium rhizogenes (strain K84 / ATCC BAA-868) (Agrobacterium radiobacter), this protein is GTPase Obg.